A 356-amino-acid chain; its full sequence is 3-isopropylmalate dehydrogenase (356 aa).

Substrate contacts are provided by Arg-91, Arg-101, Arg-129, and Asp-223. Mg(2+)-binding residues include Asp-223, Asp-247, and Asp-251. Position 281 to 293 (281 to 293 (GSAPDIAGKGIAN)) interacts with NAD(+).

Belongs to the isocitrate and isopropylmalate dehydrogenases family. LeuB type 1 subfamily. Homodimer. Mg(2+) is required as a cofactor. Requires Mn(2+) as cofactor.

The protein resides in the cytoplasm. It catalyses the reaction (2R,3S)-3-isopropylmalate + NAD(+) = 4-methyl-2-oxopentanoate + CO2 + NADH. Its pathway is amino-acid biosynthesis; L-leucine biosynthesis; L-leucine from 3-methyl-2-oxobutanoate: step 3/4. Functionally, catalyzes the oxidation of 3-carboxy-2-hydroxy-4-methylpentanoate (3-isopropylmalate) to 3-carboxy-4-methyl-2-oxopentanoate. The product decarboxylates to 4-methyl-2 oxopentanoate. The protein is 3-isopropylmalate dehydrogenase of Ralstonia nicotianae (strain ATCC BAA-1114 / GMI1000) (Ralstonia solanacearum).